We begin with the raw amino-acid sequence, 541 residues long: Chaperonin GroEL 2 (541 aa).

Residues 29 to 32 (TLGP), 86 to 90 (DGTTT), Gly413, 476 to 478 (NAA), and Asp492 each bind ATP.

This sequence belongs to the chaperonin (HSP60) family. In terms of assembly, forms a cylinder of 14 subunits composed of two heptameric rings stacked back-to-back. Interacts with the co-chaperonin GroES.

It is found in the secreted. The protein localises to the capsule. The protein resides in the cell surface. It localises to the cell wall. The enzyme catalyses ATP + H2O + a folded polypeptide = ADP + phosphate + an unfolded polypeptide.. Its function is as follows. Together with its co-chaperonin GroES, plays an essential role in assisting protein folding. The GroEL-GroES system forms a nano-cage that allows encapsulation of the non-native substrate proteins and provides a physical environment optimized to promote and accelerate protein folding. In Mycobacterium ulcerans (strain Agy99), this protein is Chaperonin GroEL 2.